The primary structure comprises 793 residues: ClpA homolog protein (793 aa).

Residues 1-24 (MRPRSNAGSSPPDPEEQEHAQVPS) are disordered. A Clp R domain is found at 22–168 (VPSFSSTLEQ…NFIAHGVAKD (147 aa)). 2 repeat regions span residues 25 to 88 (FSST…IDDD) and 103 to 168 (PTAA…VAKD). A disordered region spans residues 169-194 (PSYGESRPVQGADEPQETPKAEAGEA). Residues 185–194 (ETPKAEAGEA) are compositionally biased toward basic and acidic residues. Residues 199 to 447 (LSKYCVDLNI…AQHLVSDSKR (249 aa)) are i. ATP-binding positions include 244–251 (GDPGVGKT) and 525–532 (GPTGVGKT). The II stretch occupies residues 451 to 639 (LGTKEIEAVV…ILIMTSNVGA (189 aa)).

Belongs to the ClpA/ClpB family.

In Fuscovulum blasticum (Rhodobacter blasticus), this protein is ClpA homolog protein.